Here is a 429-residue protein sequence, read N- to C-terminus: Argininosuccinate lyase (429 aa).

This sequence belongs to the lyase 1 family. Argininosuccinate lyase subfamily.

The protein localises to the cytoplasm. It catalyses the reaction 2-(N(omega)-L-arginino)succinate = fumarate + L-arginine. It participates in amino-acid biosynthesis; L-arginine biosynthesis; L-arginine from L-ornithine and carbamoyl phosphate: step 3/3. The chain is Argininosuccinate lyase from Pyrobaculum calidifontis (strain DSM 21063 / JCM 11548 / VA1).